A 142-amino-acid polypeptide reads, in one-letter code: Biogenesis of lysosome-related organelles complex 1 subunit 2 (142 aa).

A disordered region spans residues 1–33 (MAAAAEGVLATRSDEPARDDAAVETAEEAKEPA). Ala-2 is subject to N-acetylalanine. Positions 12–33 (RSDEPARDDAAVETAEEAKEPA) are enriched in basic and acidic residues. Positions 79-127 (EMKDIAINISRNLKDLNQKYAGLQPYLDQINVIEEQVAALEQAAYKLDA) form a coiled coil.

Belongs to the BLOC1S2 family. As to quaternary structure, component of the biogenesis of lysosome-related organelles complex 1 (BLOC-1) composed of BLOC1S1, BLOC1S2, BLOC1S3, BLOC1S4, BLOC1S5, BLOC1S6, DTNBP1/BLOC1S7 and SNAPIN/BLOC1S8. Octamer composed of one copy each BLOC1S1, BLOC1S2, BLOC1S3, BLOC1S4, BLOC1S5, BLOC1S6, DTNBP1/BLOC1S7 and SNAPIN/BLOC1S8. Interacts directly with BLOC1S1, BLOC1S3, BLOC1S4, BLOC1S5 and SNAPIN. The BLOC-1 complex associates with the AP-3 protein complex and membrane protein cargos. Component of the BLOC-one-related complex (BORC) which is composed of BLOC1S1, BLOC1S2, BORCS5, BORCS6, BORCS7, BORCS8, KXD1 and SNAPIN. Interacts with gamma-tubulin. Interacts with IFT57. As to expression, isoform 1 and isoform 2 are widely expressed. Expressed in various malignant tumor tissues (at protein level).

The protein localises to the cytoplasm. The protein resides in the cytoskeleton. It is found in the microtubule organizing center. Its subcellular location is the centrosome. It localises to the lysosome membrane. Functionally, component of the BLOC-1 complex, a complex that is required for normal biogenesis of lysosome-related organelles (LRO), such as platelet dense granules and melanosomes. In concert with the AP-3 complex, the BLOC-1 complex is required to target membrane protein cargos into vesicles assembled at cell bodies for delivery into neurites and nerve terminals. The BLOC-1 complex, in association with SNARE proteins, is also proposed to be involved in neurite extension. As part of the BORC complex may play a role in lysosomes movement and localization at the cell periphery. Associated with the cytosolic face of lysosomes, the BORC complex may recruit ARL8B and couple lysosomes to microtubule plus-end-directed kinesin motor. May play a role in cell proliferation. The polypeptide is Biogenesis of lysosome-related organelles complex 1 subunit 2 (BLOC1S2) (Homo sapiens (Human)).